The sequence spans 271 residues: 5-deoxy-glucuronate isomerase (271 aa).

It belongs to the isomerase IolB family.

The catalysed reaction is 5-deoxy-D-glucuronate = 5-dehydro-2-deoxy-D-gluconate. The protein operates within polyol metabolism; myo-inositol degradation into acetyl-CoA; acetyl-CoA from myo-inositol: step 4/7. Functionally, involved in the isomerization of 5-deoxy-glucuronate (5DG) to 5-dehydro-2-deoxy-D-gluconate (DKG or 2-deoxy-5-keto-D-gluconate). This chain is 5-deoxy-glucuronate isomerase, found in Lacticaseibacillus casei (Lactobacillus casei).